The following is a 183-amino-acid chain: uncharacterized protein (183 aa).

This is an uncharacterized protein from Acanthamoeba polyphaga mimivirus (APMV).